We begin with the raw amino-acid sequence, 247 residues long: Mast cell protease 2 (247 aa).

A signal peptide spans 1–19 (MHLLALHLLLFLLGSRAKA). The propeptide at 20-21 (GE) is activation peptide. Residues 22–245 (IIGGTECKPH…YRPWINKILR (224 aa)) form the Peptidase S1 domain. A disulfide bridge connects residues Cys51 and Cys67. His66 functions as the Charge relay system in the catalytic mechanism. A glycan (N-linked (GlcNAc...) asparagine) is linked at Asn80. The active-site Charge relay system is Asp110. Intrachain disulfides connect Cys144-Cys209 and Cys175-Cys188. Residue Ser203 is the Charge relay system of the active site.

This sequence belongs to the peptidase S1 family. Granzyme subfamily.

The sequence is that of Mast cell protease 2 from Meriones unguiculatus (Mongolian jird).